Consider the following 166-residue polypeptide: MTESTSRRPAYARLLDRAARILAVRDHSEQELRRKLAAPIMGKNGPEEIDATAEDYERVIAWCHEHGYLDDSRFVARFIASRSRKGYGPARIRQELNQKGISREATEKAMRECDIDWCALARDQATRKYGEPLPTVFSEKVKIQRFLLYRGYLMEDIQDIWRNFAD.

Belongs to the RecX family.

It localises to the cytoplasm. Its function is as follows. Modulates RecA activity. The polypeptide is Regulatory protein RecX (Escherichia coli O7:K1 (strain IAI39 / ExPEC)).